The primary structure comprises 299 residues: Inactive recombination-promoting nuclease-like protein RpnE (299 aa).

It belongs to the Rpn/YhgA-like nuclease family.

Its function is as follows. Upon expression has no effect on RecA-independent DNA recombination, cell viability or DNA damage. This is Inactive recombination-promoting nuclease-like protein RpnE (yfaD) from Escherichia coli (strain K12).